We begin with the raw amino-acid sequence, 573 residues long: ESX-1 secretion system protein EccA1 (573 aa).

334–341 (GPPGTGKT) provides a ligand contact to ATP.

The protein belongs to the CbxX/CfxQ family. Part of the ESX-1 / type VII secretion system (T7SS), which is composed of cytosolic and membrane components.

Its subcellular location is the cytoplasm. Part of the ESX-1 / type VII specialized secretion system (T7SS), which exports several proteins including EsxA and EsxB. EccA1 exhibits ATPase activity and may provide energy for the export of ESX-1 substrates. The sequence is that of ESX-1 secretion system protein EccA1 from Mycobacterium leprae (strain TN).